Reading from the N-terminus, the 152-residue chain is uncharacterized protein (152 aa).

Topologically, residues 1-5 are cytoplasmic; the sequence is MWFPQ. A helical transmembrane segment spans residues 6–26; sequence IIAGMAAGGAASAMTPGKVLF. The Extracellular portion of the chain corresponds to 27 to 38; the sequence is TNALGLGCSRSR. A helical membrane pass occupies residues 39–59; sequence GLFLEMFGTAVLCLTVLMTAV. The Cytoplasmic segment spans residues 60-65; sequence EKRETN. The chain crosses the membrane as a helical span at residues 66–86; it reads FMAALPIGISLFMAHMALTGY. Over 87-110 the chain is Extracellular; that stretch reads TGTGVNPARSLGAAVAARYFPHYH. Residues 92-94 carry the NPA motif; sequence NPA. A helical membrane pass occupies residues 111–131; sequence WIYWISPLLGAFLAWSVWQLL. At 132–152 the chain is on the cytoplasmic side; that stretch reads QILDYTTYVNAEKAAGQKKED.

It belongs to the MIP/aquaporin (TC 1.A.8) family.

The protein localises to the membrane. This is an uncharacterized protein from Saccharomyces cerevisiae (strain RM11-1a) (Baker's yeast).